Consider the following 260-residue polypeptide: uncharacterized protein (260 aa).

The HTH iclR-type domain occupies 7 to 67 (VPALTRAIDI…DHQENFCLWT (61 aa)). The segment at residues 28–47 (AATIIDTLGIPKSTAYLLLN) is a DNA-binding region (H-T-H motif). The IclR-ED domain occupies 82 to 251 (LRELARPRLT…ARDISRLLGW (170 aa)).

This is an uncharacterized protein from Escherichia coli (strain K12).